Consider the following 360-residue polypeptide: Mitogen-activated protein kinase 14 (360 aa).

S2 carries the post-translational modification N-acetylserine. Residue S2 is modified to Phosphoserine. Position 16 is a phosphothreonine (T16). In terms of domain architecture, Protein kinase spans 24–308 (YQNLSPVGSG…AAQALAHAYF (285 aa)). ATP-binding positions include 30 to 38 (VGSGAYGSV) and K53. K53 bears the N6-acetyllysine mark. Residue D150 is the Proton acceptor of the active site. K152 is subject to N6-acetyllysine. T180 carries the post-translational modification Phosphothreonine. Positions 180 to 182 (TGY) match the TXY motif. Position 182 is a phosphotyrosine (Y182). A Phosphotyrosine; by ZAP70 modification is found at Y323.

Belongs to the protein kinase superfamily. CMGC Ser/Thr protein kinase family. MAP kinase subfamily. As to quaternary structure, component of a signaling complex containing at least AKAP13, PKN1, MAPK14, ZAK and MAP2K3. Within this complex, AKAP13 interacts directly with PKN1, which in turn recruits MAPK14, MAP2K3 and ZAK. Binds to a kinase interaction motif within the protein tyrosine phosphatase, PTPRR. This interaction retains MAPK14 in the cytoplasm and prevents nuclear accumulation. Interacts with SPAG9 and GADD45A. Interacts with CDC25B, CDC25C, DUSP1, DUSP10, DUSP16, NP60, SUPT20H and TAB1. Interacts with casein kinase II subunits CSNK2A1 and CSNK2B. Interacts with PPM1D. Interacts with CDK5RAP3; recruits PPM1D to MAPK14 and may regulate its dephosphorylation. Interacts with DUSP2; this interaction does not lead to catalytic activation of DUSP2 and dephosphrylation of MAPK14. Requires Mg(2+) as cofactor. Post-translationally, dually phosphorylated on Thr-180 and Tyr-182 by the MAP2Ks MAP2K3/MKK3, MAP2K4/MKK4 and MAP2K6/MKK6 in response to inflammatory cytokines, environmental stress or growth factors, which activates the enzyme. Dual phosphorylation can also be mediated by TAB1-mediated autophosphorylation. TCR engagement in T-cells also leads to Tyr-323 phosphorylation by ZAP70. Dephosphorylated and inactivated by DUPS1, DUSP10 and DUSP16. PPM1D also mediates dephosphorylation and inactivation of MAPK14. Acetylated at Lys-53 and Lys-152 by KAT2B and EP300. Acetylation at Lys-53 increases the affinity for ATP and enhances kinase activity. Lys-53 and Lys-152 are deacetylated by HDAC3. In terms of processing, ubiquitinated. Ubiquitination leads to degradation by the proteasome pathway.

The protein localises to the cytoplasm. Its subcellular location is the nucleus. It carries out the reaction L-seryl-[protein] + ATP = O-phospho-L-seryl-[protein] + ADP + H(+). It catalyses the reaction L-threonyl-[protein] + ATP = O-phospho-L-threonyl-[protein] + ADP + H(+). Its activity is regulated as follows. Activated by cell stresses such as DNA damage, heat shock, osmotic shock, anisomycin and sodium arsenite, as well as pro-inflammatory stimuli such as bacterial lipopolysaccharide (LPS) and interleukin-1. Activation occurs through dual phosphorylation of Thr-180 and Tyr-182 by either of two dual specificity kinases, MAP2K3/MKK3 or MAP2K6/MKK6, and potentially also MAP2K4/MKK4, as well as by TAB1-mediated autophosphorylation. MAPK14 phosphorylated on both Thr-180 and Tyr-182 is 10-20-fold more active than MAPK14 phosphorylated only on Thr-180, whereas MAPK14 phosphorylated on Tyr-182 alone is inactive. whereas Thr-180 is necessary for catalysis, Tyr-182 may be required for auto-activation and substrate recognition. Phosphorylated at Tyr-323 by ZAP70 in an alternative activation pathway in response to TCR signaling in T-cells. This alternative pathway is inhibited by GADD45A. Inhibited by dual specificity phosphatases, such as DUSP1, DUSP10, and DUSP16. Specifically inhibited by the binding of pyridinyl-imidazole compounds, which are cytokine-suppressive anti-inflammatory drugs (CSAID). SB203580 is an inhibitor of MAPK14. Its function is as follows. Serine/threonine kinase which acts as an essential component of the MAP kinase signal transduction pathway. MAPK14 is one of the four p38 MAPKs which play an important role in the cascades of cellular responses evoked by extracellular stimuli such as pro-inflammatory cytokines or physical stress leading to direct activation of transcription factors. Accordingly, p38 MAPKs phosphorylate a broad range of proteins and it has been estimated that they may have approximately 200 to 300 substrates each. Some of the targets are downstream kinases which are activated through phosphorylation and further phosphorylate additional targets. RPS6KA5/MSK1 and RPS6KA4/MSK2 can directly phosphorylate and activate transcription factors such as CREB1, ATF1, the NF-kappa-B isoform RELA/NFKB3, STAT1 and STAT3, but can also phosphorylate histone H3 and the nucleosomal protein HMGN1. RPS6KA5/MSK1 and RPS6KA4/MSK2 play important roles in the rapid induction of immediate-early genes in response to stress or mitogenic stimuli, either by inducing chromatin remodeling or by recruiting the transcription machinery. On the other hand, two other kinase targets, MAPKAPK2/MK2 and MAPKAPK3/MK3, participate in the control of gene expression mostly at the post-transcriptional level, by phosphorylating ZFP36 (tristetraprolin) and ELAVL1, and by regulating EEF2K, which is important for the elongation of mRNA during translation. MKNK1/MNK1 and MKNK2/MNK2, two other kinases activated by p38 MAPKs, regulate protein synthesis by phosphorylating the initiation factor EIF4E2. MAPK14 also interacts with casein kinase II, leading to its activation through autophosphorylation and further phosphorylation of TP53/p53. In the cytoplasm, the p38 MAPK pathway is an important regulator of protein turnover. For example, CFLAR is an inhibitor of TNF-induced apoptosis whose proteasome-mediated degradation is regulated by p38 MAPK phosphorylation. In a similar way, MAPK14 phosphorylates the ubiquitin ligase SIAH2, regulating its activity towards EGLN3. MAPK14 may also inhibit the lysosomal degradation pathway of autophagy by interfering with the intracellular trafficking of the transmembrane protein ATG9. Another function of MAPK14 is to regulate the endocytosis of membrane receptors by different mechanisms that impinge on the small GTPase RAB5A. In addition, clathrin-mediated EGFR internalization induced by inflammatory cytokines and UV irradiation depends on MAPK14-mediated phosphorylation of EGFR itself as well as of RAB5A effectors. Ectodomain shedding of transmembrane proteins is regulated by p38 MAPKs as well. In response to inflammatory stimuli, p38 MAPKs phosphorylate the membrane-associated metalloprotease ADAM17. Such phosphorylation is required for ADAM17-mediated ectodomain shedding of TGF-alpha family ligands, which results in the activation of EGFR signaling and cell proliferation. Another p38 MAPK substrate is FGFR1. FGFR1 can be translocated from the extracellular space into the cytosol and nucleus of target cells, and regulates processes such as rRNA synthesis and cell growth. FGFR1 translocation requires p38 MAPK activation. In the nucleus, many transcription factors are phosphorylated and activated by p38 MAPKs in response to different stimuli. Classical examples include ATF1, ATF2, ATF6, ELK1, PTPRH, DDIT3, TP53/p53 and MEF2C and MEF2A. The p38 MAPKs are emerging as important modulators of gene expression by regulating chromatin modifiers and remodelers. The promoters of several genes involved in the inflammatory response, such as IL6, IL8 and IL12B, display a p38 MAPK-dependent enrichment of histone H3 phosphorylation on 'Ser-10' (H3S10ph) in LPS-stimulated myeloid cells. This phosphorylation enhances the accessibility of the cryptic NF-kappa-B-binding sites marking promoters for increased NF-kappa-B recruitment. Phosphorylates CDC25B and CDC25C which is required for binding to 14-3-3 proteins and leads to initiation of a G2 delay after ultraviolet radiation. Phosphorylates TIAR following DNA damage, releasing TIAR from GADD45A mRNA and preventing mRNA degradation. The p38 MAPKs may also have kinase-independent roles, which are thought to be due to the binding to targets in the absence of phosphorylation. Protein O-Glc-N-acylation catalyzed by the OGT is regulated by MAPK14, and, although OGT does not seem to be phosphorylated by MAPK14, their interaction increases upon MAPK14 activation induced by glucose deprivation. This interaction may regulate OGT activity by recruiting it to specific targets such as neurofilament H, stimulating its O-Glc-N-acylation. Required in mid-fetal development for the growth of embryo-derived blood vessels in the labyrinth layer of the placenta. Also plays an essential role in developmental and stress-induced erythropoiesis, through regulation of EPO gene expression. Phosphorylates S100A9 at 'Thr-113'. The sequence is that of Mitogen-activated protein kinase 14 from Rattus norvegicus (Rat).